The chain runs to 120 residues: Large ribosomal subunit protein uL18 (120 aa).

It belongs to the universal ribosomal protein uL18 family. As to quaternary structure, part of the 50S ribosomal subunit; part of the 5S rRNA/L5/L18/L25 subcomplex. Contacts the 5S and 23S rRNAs.

In terms of biological role, this is one of the proteins that bind and probably mediate the attachment of the 5S RNA into the large ribosomal subunit, where it forms part of the central protuberance. The sequence is that of Large ribosomal subunit protein uL18 from Chloroflexus aggregans (strain MD-66 / DSM 9485).